The chain runs to 667 residues: Alpha-1,4-glucan:maltose-1-phosphate maltosyltransferase (667 aa).

3 residues coordinate alpha-maltose 1-phosphate: Lys-261, Gln-321, and Asp-356. Catalysis depends on Asp-392, which acts as the Nucleophile. Residue Asn-393 participates in alpha-maltose 1-phosphate binding. Glu-421 acts as the Proton donor in catalysis. 534–535 contacts alpha-maltose 1-phosphate; sequence KY.

Belongs to the glycosyl hydrolase 13 family. GlgE subfamily. As to quaternary structure, homodimer.

It catalyses the reaction alpha-maltose 1-phosphate + [(1-&gt;4)-alpha-D-glucosyl](n) = [(1-&gt;4)-alpha-D-glucosyl](n+2) + phosphate. Its function is as follows. Maltosyltransferase that uses maltose 1-phosphate (M1P) as the sugar donor to elongate linear or branched alpha-(1-&gt;4)-glucans. Is involved in a branched alpha-glucan biosynthetic pathway from trehalose, together with TreS, Mak and GlgB. This is Alpha-1,4-glucan:maltose-1-phosphate maltosyltransferase from Methylacidiphilum infernorum (isolate V4) (Methylokorus infernorum (strain V4)).